Consider the following 354-residue polypeptide: Biotin synthase (354 aa).

The region spanning 40–258 (NEVQVSTLLS…IAVARILMPR (219 aa)) is the Radical SAM core domain. [4Fe-4S] cluster-binding residues include Cys-55, Cys-59, and Cys-62. 4 residues coordinate [2Fe-2S] cluster: Cys-99, Cys-130, Cys-190, and Arg-262.

Belongs to the radical SAM superfamily. Biotin synthase family. Homodimer. [4Fe-4S] cluster is required as a cofactor. It depends on [2Fe-2S] cluster as a cofactor.

The catalysed reaction is (4R,5S)-dethiobiotin + (sulfur carrier)-SH + 2 reduced [2Fe-2S]-[ferredoxin] + 2 S-adenosyl-L-methionine = (sulfur carrier)-H + biotin + 2 5'-deoxyadenosine + 2 L-methionine + 2 oxidized [2Fe-2S]-[ferredoxin]. The protein operates within cofactor biosynthesis; biotin biosynthesis; biotin from 7,8-diaminononanoate: step 2/2. Its function is as follows. Catalyzes the conversion of dethiobiotin (DTB) to biotin by the insertion of a sulfur atom into dethiobiotin via a radical-based mechanism. In Hahella chejuensis (strain KCTC 2396), this protein is Biotin synthase.